Reading from the N-terminus, the 973-residue chain is Translation initiation factor IF-2 (973 aa).

Residues 52-388 (PDQEEVKPAA…QAQKPAQPLE (337 aa)) form a disordered region. Composition is skewed to basic and acidic residues over residues 83 to 120 (ESRK…DHYK), 128 to 148 (VPSR…DKAR), 157 to 172 (QGAR…ERTR), 186 to 202 (VQQE…RPPF), 210 to 246 (PQHE…DKGA), 272 to 288 (RAGE…ETKP), 314 to 333 (LLDD…EKQK), and 343 to 360 (KSRE…ERLR). Low complexity predominate over residues 374 to 386 (AKPQEQAQKPAQP). The tr-type G domain maps to 472 to 641 (DRPCVVTVMG…LLVAEMSELK (170 aa)). The G1 stretch occupies residues 481 to 488 (GHVDHGKT). A GTP-binding site is contributed by 481 to 488 (GHVDHGKT). Residues 506–510 (GITQH) form a G2 region. The tract at residues 527–530 (DTPG) is G3. GTP is bound by residues 527-531 (DTPGH) and 581-584 (NKID). The tract at residues 581–584 (NKID) is G4. The segment at 617–619 (SAL) is G5.

It belongs to the TRAFAC class translation factor GTPase superfamily. Classic translation factor GTPase family. IF-2 subfamily.

Its subcellular location is the cytoplasm. One of the essential components for the initiation of protein synthesis. Protects formylmethionyl-tRNA from spontaneous hydrolysis and promotes its binding to the 30S ribosomal subunits. Also involved in the hydrolysis of GTP during the formation of the 70S ribosomal complex. This is Translation initiation factor IF-2 from Pelotomaculum thermopropionicum (strain DSM 13744 / JCM 10971 / SI).